The following is a 542-amino-acid chain: Chaperonin GroEL 3 (542 aa).

Residues 30 to 33 (TLGP), Lys-51, 87 to 91 (DGTTT), Gly-415, and Asp-496 contribute to the ATP site.

Belongs to the chaperonin (HSP60) family. Forms a cylinder of 14 subunits composed of two heptameric rings stacked back-to-back. Interacts with the co-chaperonin GroES.

The protein resides in the cytoplasm. It carries out the reaction ATP + H2O + a folded polypeptide = ADP + phosphate + an unfolded polypeptide.. In terms of biological role, together with its co-chaperonin GroES, plays an essential role in assisting protein folding. The GroEL-GroES system forms a nano-cage that allows encapsulation of the non-native substrate proteins and provides a physical environment optimized to promote and accelerate protein folding. The polypeptide is Chaperonin GroEL 3 (Sinorhizobium medicae (strain WSM419) (Ensifer medicae)).